The following is a 142-amino-acid chain: Hemoglobin subunit alpha (142 aa).

The 142-residue stretch at 1 to 142 folds into the Globin domain; sequence VLSAADKNNV…VSTVLTSKYR (142 aa). Position 3 is a phosphoserine (serine 3). N6-succinyllysine occurs at positions 7 and 11. Lysine 16 bears the N6-acetyllysine; alternate mark. Residue lysine 16 is modified to N6-succinyllysine; alternate. Tyrosine 24 is modified (phosphotyrosine). Phosphoserine is present on serine 35. Residue lysine 40 is modified to N6-succinyllysine. O2 is bound at residue histidine 58. Histidine 87 provides a ligand contact to heme b. Serine 102 carries the phosphoserine modification. Threonine 108 carries the post-translational modification Phosphothreonine. Serine 125 is modified (phosphoserine). Threonine 135 and threonine 138 each carry phosphothreonine. At serine 139 the chain carries Phosphoserine.

Belongs to the globin family. As to quaternary structure, heterotetramer of two alpha chains and two beta chains. As to expression, red blood cells.

Involved in oxygen transport from the lung to the various peripheral tissues. Its function is as follows. Hemopressin acts as an antagonist peptide of the cannabinoid receptor CNR1. Hemopressin-binding efficiently blocks cannabinoid receptor CNR1 and subsequent signaling. The chain is Hemoglobin subunit alpha (HBA) from Procavia capensis habessinica (Abyssinian hyrax).